A 747-amino-acid polypeptide reads, in one-letter code: NAD(P)H-quinone oxidoreductase subunit 5, chloroplastic (747 aa).

16 consecutive transmembrane segments (helical) span residues 9 to 29 (WIIP…LLLF), 40 to 60 (WAFP…DLSI), 89 to 109 (IDSL…LVLI), 125 to 145 (FAYL…SNLI), 147 to 167 (VYIF…FWFT), 185 to 205 (GDFG…SLEF), 219 to 239 (NEVN…GSVA), 258 to 278 (TPIS…FLVA), 280 to 300 (LLPF…IGII), 327 to 347 (LGYM…FHLI), 354 to 374 (ALLF…VGYS), 396 to 416 (TAFL…CFWS), 425 to 445 (WLYS…TAFY), 552 to 572 (LFSM…GISF), 606 to 626 (FFTN…IASF), and 727 to 747 (YILF…SFFI).

Belongs to the complex I subunit 5 family. NDH is composed of at least 16 different subunits, 5 of which are encoded in the nucleus.

It is found in the plastid. The protein resides in the chloroplast thylakoid membrane. The enzyme catalyses a plastoquinone + NADH + (n+1) H(+)(in) = a plastoquinol + NAD(+) + n H(+)(out). It catalyses the reaction a plastoquinone + NADPH + (n+1) H(+)(in) = a plastoquinol + NADP(+) + n H(+)(out). NDH shuttles electrons from NAD(P)H:plastoquinone, via FMN and iron-sulfur (Fe-S) centers, to quinones in the photosynthetic chain and possibly in a chloroplast respiratory chain. The immediate electron acceptor for the enzyme in this species is believed to be plastoquinone. Couples the redox reaction to proton translocation, and thus conserves the redox energy in a proton gradient. The chain is NAD(P)H-quinone oxidoreductase subunit 5, chloroplastic (ndhF) from Lotus japonicus (Lotus corniculatus var. japonicus).